Consider the following 503-residue polypeptide: ATP synthase subunit alpha (503 aa).

ATP is bound at residue 170 to 177; that stretch reads GDKQTGKT.

It belongs to the ATPase alpha/beta chains family. F-type ATPases have 2 components, CF(1) - the catalytic core - and CF(0) - the membrane proton channel. CF(1) has five subunits: alpha(3), beta(3), gamma(1), delta(1), epsilon(1). CF(0) has three main subunits: a(1), b(2) and c(9-12). The alpha and beta chains form an alternating ring which encloses part of the gamma chain. CF(1) is attached to CF(0) by a central stalk formed by the gamma and epsilon chains, while a peripheral stalk is formed by the delta and b chains.

The protein resides in the cell inner membrane. The enzyme catalyses ATP + H2O + 4 H(+)(in) = ADP + phosphate + 5 H(+)(out). Its function is as follows. Produces ATP from ADP in the presence of a proton gradient across the membrane. The alpha chain is a regulatory subunit. In Helicobacter pylori (strain J99 / ATCC 700824) (Campylobacter pylori J99), this protein is ATP synthase subunit alpha.